The chain runs to 426 residues: Serine--tRNA ligase (426 aa).

227–229 (TSE) provides a ligand contact to L-serine. ATP-binding positions include 258-260 (RKE) and Val-274. Glu-281 is an L-serine binding site. ATP is bound at residue 345 to 348 (ELTS). Residue Thr-380 participates in L-serine binding.

It belongs to the class-II aminoacyl-tRNA synthetase family. Type-1 seryl-tRNA synthetase subfamily. Homodimer. The tRNA molecule binds across the dimer.

It is found in the cytoplasm. It catalyses the reaction tRNA(Ser) + L-serine + ATP = L-seryl-tRNA(Ser) + AMP + diphosphate + H(+). It carries out the reaction tRNA(Sec) + L-serine + ATP = L-seryl-tRNA(Sec) + AMP + diphosphate + H(+). It participates in aminoacyl-tRNA biosynthesis; selenocysteinyl-tRNA(Sec) biosynthesis; L-seryl-tRNA(Sec) from L-serine and tRNA(Sec): step 1/1. In terms of biological role, catalyzes the attachment of serine to tRNA(Ser). Is also able to aminoacylate tRNA(Sec) with serine, to form the misacylated tRNA L-seryl-tRNA(Sec), which will be further converted into selenocysteinyl-tRNA(Sec). The protein is Serine--tRNA ligase of Clavibacter michiganensis subsp. michiganensis (strain NCPPB 382).